The chain runs to 366 residues: tRNA-specific 2-thiouridylase MnmA (366 aa).

ATP contacts are provided by residues 6 to 13 (AMSGGVDS) and Leu-32. The active-site Nucleophile is the Cys-101. Cys-101 and Cys-197 are joined by a disulfide. ATP is bound at residue Gly-125. An interaction with tRNA region spans residues 147–149 (KDQ). Cys-197 acts as the Cysteine persulfide intermediate in catalysis.

The protein belongs to the MnmA/TRMU family.

The protein localises to the cytoplasm. It carries out the reaction S-sulfanyl-L-cysteinyl-[protein] + uridine(34) in tRNA + AH2 + ATP = 2-thiouridine(34) in tRNA + L-cysteinyl-[protein] + A + AMP + diphosphate + H(+). Its function is as follows. Catalyzes the 2-thiolation of uridine at the wobble position (U34) of tRNA, leading to the formation of s(2)U34. This Cutibacterium acnes (strain DSM 16379 / KPA171202) (Propionibacterium acnes) protein is tRNA-specific 2-thiouridylase MnmA.